A 185-amino-acid polypeptide reads, in one-letter code: Large ribosomal subunit protein uL22 (185 aa).

Belongs to the universal ribosomal protein uL22 family.

In Debaryomyces hansenii (strain ATCC 36239 / CBS 767 / BCRC 21394 / JCM 1990 / NBRC 0083 / IGC 2968) (Yeast), this protein is Large ribosomal subunit protein uL22 (RPL17).